The following is an 84-amino-acid chain: Toxin CsE9 (84 aa).

Residues 1-19 (MNSLLMITTCLILIGTVLA) form the signal peptide. The LCN-type CS-alpha/beta domain occupies 20 to 83 (EDGYLFDKRK…ISRTPGKTCK (64 aa)). Disulfide bonds link C31–C82, C35–C58, C44–C63, and C48–C65.

Belongs to the long (4 C-C) scorpion toxin superfamily. Sodium channel inhibitor family. Beta subfamily. In terms of tissue distribution, expressed by the venom gland.

The protein resides in the secreted. Its function is as follows. Beta toxins bind voltage-independently at site-4 of sodium channels (Nav) and shift the voltage of activation toward more negative potentials thereby affecting sodium channel activation and promoting spontaneous and repetitive firing. This is Toxin CsE9 from Centruroides sculpturatus (Arizona bark scorpion).